A 39-amino-acid polypeptide reads, in one-letter code: Natriuretic peptide TcNPa (39 aa).

A propeptide spanning residues 1 to 8 (SGSETAKI) is cleaved from the precursor. Cys12 and Cys28 are joined by a disulfide. A glycan (O-linked (GalNAc...) threonine) is linked at Thr35.

Belongs to the natriuretic peptide family. In terms of processing, O-linked glycans consist of galactosyl-beta(1-3)-N-acetylgalactosamine (Gal-GalNAc). The synthetic non-glycosylated form shows higher potency on natriuretic receptors (EC(50)=672.90 nM) and NPR2 (EC(50)=261.0 nM). In terms of tissue distribution, expressed by the venom gland.

It localises to the secreted. Functionally, snake venom natriuretic peptide that targets both NPR1 (EC(50)=1080.0 nM) and NPR2 (EC(50)=328.60 nM). Exhibits hypotensive and vasodepressor activities. The polypeptide is Natriuretic peptide TcNPa (Tropidechis carinatus (Australian rough-scaled snake)).